A 298-amino-acid chain; its full sequence is Small ribosomal subunit protein uS2 (298 aa).

A disordered region spans residues 240–298 (AGENWDTQAPGAGVPGSAFAAASAAAATSWEADGGDWAASSAPPAGESWAETQPTEAKW). Low complexity predominate over residues 248 to 271 (APGAGVPGSAFAAASAAAATSWEA). Residues 289–298 (AETQPTEAKW) show a composition bias toward polar residues.

Belongs to the universal ribosomal protein uS2 family. Component of the small ribosomal subunit. Mature ribosomes consist of a small (40S) and a large (60S) subunit. The 40S subunit contains about 33 different proteins and 1 molecule of RNA (18S). The 60S subunit contains about 49 different proteins and 3 molecules of RNA (25S, 5.8S and 5S). Interacts with rps21.

The protein resides in the cytoplasm. Required for the assembly and/or stability of the 40S ribosomal subunit. Required for the processing of the 20S rRNA-precursor to mature 18S rRNA in a late step of the maturation of 40S ribosomal subunits. The protein is Small ribosomal subunit protein uS2 (rps0) of Aspergillus clavatus (strain ATCC 1007 / CBS 513.65 / DSM 816 / NCTC 3887 / NRRL 1 / QM 1276 / 107).